The following is a 247-amino-acid chain: ATP synthase subunit a, chloroplastic (247 aa).

The next 5 helical transmembrane spans lie at glutamine 38–valine 58, valine 95–leucine 115, isoleucine 134–serine 154, leucine 199–leucine 219, and glycine 220–glycine 240.

The protein belongs to the ATPase A chain family. F-type ATPases have 2 components, CF(1) - the catalytic core - and CF(0) - the membrane proton channel. CF(1) has five subunits: alpha(3), beta(3), gamma(1), delta(1), epsilon(1). CF(0) has four main subunits: a, b, b' and c.

Its subcellular location is the plastid. It localises to the chloroplast thylakoid membrane. Functionally, key component of the proton channel; it plays a direct role in the translocation of protons across the membrane. This Lolium perenne (Perennial ryegrass) protein is ATP synthase subunit a, chloroplastic.